A 147-amino-acid chain; its full sequence is Small ribosomal subunit protein bS6 (147 aa).

The tract at residues 114-147 is disordered; the sequence is GKGTRAAEQAAAAEAAAPAAAPAEPASAEPAPAV. The segment covering 119–147 has biased composition (low complexity); it reads AAEQAAAAEAAAPAAAPAEPASAEPAPAV.

Belongs to the bacterial ribosomal protein bS6 family.

In terms of biological role, binds together with bS18 to 16S ribosomal RNA. The protein is Small ribosomal subunit protein bS6 of Koribacter versatilis (strain Ellin345).